Here is a 1203-residue protein sequence, read N- to C-terminus: Exonuclease/helicase subunit RexA (1203 aa).

In terms of domain architecture, UvrD-like helicase ATP-binding spans 4-472; the sequence is VKLTPEQNEA…IRLKENFRSR (469 aa). 25–32 provides a ligand contact to ATP; it reads ASAGSGKT. The 283-residue stretch at 503 to 785 folds into the UvrD-like helicase C-terminal domain; it reads VQGNISDYPV…RVMTFHKSKG (283 aa).

Belongs to the helicase family. AddA subfamily. Heterodimer of RexA (AddA) and RexB. It depends on Mg(2+) as a cofactor.

It catalyses the reaction Couples ATP hydrolysis with the unwinding of duplex DNA by translocating in the 3'-5' direction.. It carries out the reaction ATP + H2O = ADP + phosphate + H(+). Its function is as follows. The heterodimer acts both as an ATP-dependent DNA helicase and an ATP-dependent, dual-direction single-stranded exonuclease. Recognizes the L.lactis chi site (5'-GCGCGTG-3'), which stimulates homologous recombination. The RexA (AddA) nuclease domain is required for chi fragment generation; this subunit has 3'-&gt;5' exonuclease activity and probably also performs the helicase function. This chain is Exonuclease/helicase subunit RexA, found in Lactococcus lactis subsp. cremoris (strain MG1363).